A 97-amino-acid polypeptide reads, in one-letter code: Small integral membrane protein 8 (97 aa).

Residues 1 to 24 (MSSAPEPPTFKKEPPKEKEFQSPG) are disordered. The segment covering 9–20 (TFKKEPPKEKEF) has biased composition (basic and acidic residues). Residues 48–70 (PVMAFGLVTLSLCVAYIGYLHAI) form a helical membrane-spanning segment.

Belongs to the SMIM8 family.

It is found in the membrane. This is Small integral membrane protein 8 (SMIM8) from Homo sapiens (Human).